A 263-amino-acid chain; its full sequence is Indole-3-glycerol phosphate synthase (263 aa).

Belongs to the TrpC family.

The enzyme catalyses 1-(2-carboxyphenylamino)-1-deoxy-D-ribulose 5-phosphate + H(+) = (1S,2R)-1-C-(indol-3-yl)glycerol 3-phosphate + CO2 + H2O. It functions in the pathway amino-acid biosynthesis; L-tryptophan biosynthesis; L-tryptophan from chorismate: step 4/5. This Desulfosudis oleivorans (strain DSM 6200 / JCM 39069 / Hxd3) (Desulfococcus oleovorans) protein is Indole-3-glycerol phosphate synthase.